We begin with the raw amino-acid sequence, 556 residues long: Arginine--tRNA ligase (556 aa).

The 'HIGH' region motif lies at 132–142; the sequence is ANPTGDLHLGH.

It belongs to the class-I aminoacyl-tRNA synthetase family. In terms of assembly, monomer.

Its subcellular location is the cytoplasm. The catalysed reaction is tRNA(Arg) + L-arginine + ATP = L-arginyl-tRNA(Arg) + AMP + diphosphate. The chain is Arginine--tRNA ligase from Listeria monocytogenes serotype 4b (strain F2365).